The chain runs to 408 residues: DNA primase DnaG (408 aa).

Residues 172 to 248 form the Toprim domain; the sequence is DSIIIVEGRA…HVDYIARAPP (77 aa). Positions 178, 222, and 224 each coordinate Mg(2+). A disordered region spans residues 279 to 304; the sequence is AAGEKAETPQQPPPQQPVPQQEVREE.

It belongs to the archaeal DnaG primase family. Forms a ternary complex with MCM helicase and DNA. Component of the archaeal exosome complex. It depends on Mg(2+) as a cofactor.

It catalyses the reaction ssDNA + n NTP = ssDNA/pppN(pN)n-1 hybrid + (n-1) diphosphate.. In terms of biological role, RNA polymerase that catalyzes the synthesis of short RNA molecules used as primers for DNA polymerase during DNA replication. Also part of the exosome, which is a complex involved in RNA degradation. Acts as a poly(A)-binding protein that enhances the interaction between heteromeric, adenine-rich transcripts and the exosome. The polypeptide is DNA primase DnaG (Pyrobaculum aerophilum (strain ATCC 51768 / DSM 7523 / JCM 9630 / CIP 104966 / NBRC 100827 / IM2)).